A 271-amino-acid chain; its full sequence is Putative phosphoenolpyruvate synthase regulatory protein (271 aa).

Gly151–Thr158 contacts ADP.

Belongs to the pyruvate, phosphate/water dikinase regulatory protein family. PSRP subfamily.

The catalysed reaction is [pyruvate, water dikinase] + ADP = [pyruvate, water dikinase]-phosphate + AMP + H(+). The enzyme catalyses [pyruvate, water dikinase]-phosphate + phosphate + H(+) = [pyruvate, water dikinase] + diphosphate. Bifunctional serine/threonine kinase and phosphorylase involved in the regulation of the phosphoenolpyruvate synthase (PEPS) by catalyzing its phosphorylation/dephosphorylation. In Paraburkholderia xenovorans (strain LB400), this protein is Putative phosphoenolpyruvate synthase regulatory protein.